We begin with the raw amino-acid sequence, 754 residues long: Polyribonucleotide nucleotidyltransferase (754 aa).

Positions 525 and 531 each coordinate Mg(2+). One can recognise a KH domain in the interval 591 to 650 (PRITTIKVPVDKIGEVIGPKGKMINSITEETGASISIEDDGTVFVGASNGEAAQAAIDKI). In terms of domain architecture, S1 motif spans 662-731 (GERFLGTVVK…NRGKISLVLV (70 aa)).

The protein belongs to the polyribonucleotide nucleotidyltransferase family. The cofactor is Mg(2+).

The protein resides in the cytoplasm. The catalysed reaction is RNA(n+1) + phosphate = RNA(n) + a ribonucleoside 5'-diphosphate. Involved in mRNA degradation. Catalyzes the phosphorolysis of single-stranded polyribonucleotides processively in the 3'- to 5'-direction. This chain is Polyribonucleotide nucleotidyltransferase, found in Mycolicibacterium vanbaalenii (strain DSM 7251 / JCM 13017 / BCRC 16820 / KCTC 9966 / NRRL B-24157 / PYR-1) (Mycobacterium vanbaalenii).